The sequence spans 519 residues: Transcription factor STP1 (519 aa).

The tract at residues 16 to 35 is i; it reads IPGKIYAFFRELVSGVIISK. The span at 47–61 shows a compositional bias: basic and acidic residues; that stretch reads ATKEEGKDAADEEKT. Disordered regions lie at residues 47 to 69 and 115 to 150; these read ATKEEGKDAADEEKTTTSLFPES and LLGSRPEQDTGAPIKMSTGVTSSPLSPSGSTPEHST. The segment at 65-97 is II; the sequence is LFPESNNIDRSLNGGCSVIPCSMDVSDLNTPIS. Residues 131-146 are compositionally biased toward low complexity; the sequence is STGVTSSPLSPSGSTP. The C2H2-type 1 zinc finger occupies 160–182; it reads FICHYCDATFRIRGYLTRHIKKH. The C2H2-type 2; atypical zinc-finger motif lies at 188–223; it reads YHCPFFNSATPPDLRCHNSGGFSRRDTYKTHLKARH. A C2H2-type 3; atypical zinc finger spans residues 240-265; that stretch reads GHCAQCGEYFSTIENFVENHIESGDC. The interval 357–382 is disordered; sequence IKKKQQQVSGSTVTTPEVATQNNQEV. The segment covering 364-381 has biased composition (polar residues); sequence VSGSTVTTPEVATQNNQE.

As to quaternary structure, interacts (via Region II) with SSY5; protease component of the SPS-sensor. In terms of processing, phosphorylated by casein kinase I. Phosphorylation is not dependent on the extracellular amino acid levels, but is a prerequisite for proteolytic processing. Activated by the amino acid-induced proteolytic removal of an N-terminal inhibitory domain by serine protease SSY5, an intrinsic component of the SPS-sensor. Processing requires at least 2 components of the SCF(GRR1) ubiquitin ligase complex, namely the F-box protein GRR1 and the E2 enzyme CDC34, but does not depend on the proteasome. Processing is negatively regulated by the protein phosphatase 2A regulatory subunit RTS1.

It localises to the cell membrane. The protein localises to the nucleus. Its function is as follows. Transcription factor involved in the regulation of gene expression in response to extracellular amino acid levels. Synthesized as latent cytoplasmic precursor, which, upon a signal initiated by the plasma membrane SPS (SSY1-PTR3-SSY5) amino acid sensor system, becomes proteolytically activated and relocates to the nucleus, where it induces the expression of SPS-sensor-regulated genes, including the amino-acid permeases AGP1, BAP2, BAP3 and GNP1. Binding to promoters is facilitated by DAL81. Involved in the repression of genes subject to nitrogen catabolite repression and genes involved in stress response. Negatively regulated by inner nuclear membrane proteins ASI1, ASI2 and ASI3, which prevent unprocessed precursor forms that escape cytoplasmic anchoring from inducing SPS-sensor-regulated genes. May be involved in pre-tRNA splicing. This chain is Transcription factor STP1 (STP1), found in Saccharomyces cerevisiae (strain RM11-1a) (Baker's yeast).